A 161-amino-acid chain; its full sequence is Endoribonuclease YbeY (161 aa).

Residues His120, His124, and Asp130 each contribute to the Zn(2+) site.

This sequence belongs to the endoribonuclease YbeY family. Zn(2+) serves as cofactor.

It localises to the cytoplasm. Single strand-specific metallo-endoribonuclease involved in late-stage 70S ribosome quality control and in maturation of the 3' terminus of the 16S rRNA. This is Endoribonuclease YbeY from Chlamydia muridarum (strain MoPn / Nigg).